A 288-amino-acid polypeptide reads, in one-letter code: Zinc finger protein 42 (288 aa).

Basic and acidic residues-rich tracts occupy residues 1-11 and 26-38; these read MNEQKMNEQMK and ALDRLTLKQDEAR. Residues 1–48 are disordered; that stretch reads MNEQKMNEQMKKTAKTSGQKGPGGRALDRLTLKQDEARPVQNTRVEAP. 4 C2H2-type zinc fingers span residues 170-194, 199-221, 227-251, and 258-281; these read LECPQAGCKKKLRGKTALRKHMLVH, HVCAECGKAFTESSKLKRHFLVH, YQCTFEGCGKRFSLDFNLRTHIRIH, and VCPFDGCEKSFIQSNNQKIHILTH. Residues Lys-213 and Lys-215 each participate in a glycyl lysine isopeptide (Lys-Gly) (interchain with G-Cter in ubiquitin) cross-link.

It belongs to the krueppel C2H2-type zinc-finger protein family. In terms of processing, polyubiquitinated by RNF12, leading to proteasomal degradation. Restricted to testis, to germ cells in the early stages of spermatogenesis. Not expressed in spermatids, nor spermatozoa. Expressed in embryonic stem (ES) cells.

It is found in the nucleus. Its function is as follows. Involved in the reprogramming of X-chromosome inactivation during the acquisition of pluripotency. Required for efficient elongation of TSIX, a non-coding RNA antisense to XIST. Binds DXPas34 enhancer within the TSIX promoter. Involved in ES cell self-renewal. In Mus musculus (Mouse), this protein is Zinc finger protein 42 (Zfp42).